The chain runs to 86 residues: Cell division topological specificity factor (86 aa).

The protein belongs to the MinE family.

Prevents the cell division inhibition by proteins MinC and MinD at internal division sites while permitting inhibition at polar sites. This ensures cell division at the proper site by restricting the formation of a division septum at the midpoint of the long axis of the cell. This Azoarcus sp. (strain BH72) protein is Cell division topological specificity factor.